The sequence spans 117 residues: MLPVNPRDLEKMMRRLGIKVEQLSADEARIVLGSGETMVFRSPTVIVMRAKGQPPMVYLVGDYTVEKPREETAAEITEEDVALVAEQAGVSMEEARKALEESGGDIAEAILRLKGEE.

The NAC-A/B domain maps to 3-72 (PVNPRDLEKM…YTVEKPREET (70 aa)).

This sequence belongs to the NAC-alpha family. As to quaternary structure, homodimer. Interacts with the ribosome. Binds ribosomal RNA.

Its function is as follows. Contacts the emerging nascent chain on the ribosome. The protein is Nascent polypeptide-associated complex protein of Aeropyrum pernix (strain ATCC 700893 / DSM 11879 / JCM 9820 / NBRC 100138 / K1).